The sequence spans 278 residues: Keratin-associated protein 5-1 (278 aa).

8 tandem repeats follow at residues 42–45, 48–51, 130–133, 136–139, 142–145, 239–242, 258–261, and 268–271. Residues 42 to 271 form an 8 X 4 AA repeats of C-C-X-P region; the sequence is CCVPVCCCKP…CCSQSSCCVP (230 aa).

It belongs to the KRTAP type 5 family. Interacts with hair keratins. Expressed in hair root but not in skin. Expressed also in lung, pancreas, ovary, testis.

Its function is as follows. In the hair cortex, hair keratin intermediate filaments are embedded in an interfilamentous matrix, consisting of hair keratin-associated protein (KRTAP), which are essential for the formation of a rigid and resistant hair shaft through their extensive disulfide bond cross-linking with abundant cysteine residues of hair keratins. The matrix proteins include the high-sulfur and high-glycine-tyrosine keratins. The polypeptide is Keratin-associated protein 5-1 (KRTAP5-1) (Homo sapiens (Human)).